Consider the following 155-residue polypeptide: Large ribosomal subunit protein uL15 (155 aa).

Positions 1-13 (MKLNELRDAEGAT) are enriched in basic and acidic residues. The tract at residues 1–41 (MKLNELRDAEGATKARKRVGRGIGSGSGKTGGRGVKGQKSR) is disordered. Over residues 21–35 (RGIGSGSGKTGGRGV) the composition is skewed to gly residues.

The protein belongs to the universal ribosomal protein uL15 family. As to quaternary structure, part of the 50S ribosomal subunit.

Binds to the 23S rRNA. This Chelativorans sp. (strain BNC1) protein is Large ribosomal subunit protein uL15.